We begin with the raw amino-acid sequence, 638 residues long: Guanylate-binding protein 7 (638 aa).

Residues 1 to 310 form a GTPase domain (Globular) region; sequence MASEIHMPGP…DAINSGATPC (310 aa). The 243-residue stretch at 35–277 folds into the GB1/RHD3-type G domain; it reads TQPVVVVAIV…FCSYIFTHAK (243 aa). GTP is bound by residues 45 to 52, 67 to 69, and 97 to 101; these read GLYRTGKS, LGC, and DTEGL. The interaction with the CYBA-CYBB complex stretch occupies residues 311–638; it reads LENAMAVLAQ…LRNPGKKIIS (328 aa). Positions 590-638 are C-terminal tail; required for its localization to cytoplasmic vesicle; sequence PSVFSQILDVAGSIFIAALPGAAKLVDLGMKILSSLCNRLRNPGKKIIS.

This sequence belongs to the TRAFAC class dynamin-like GTPase superfamily. GB1/RHD3 GTPase family. GB1 subfamily. As to quaternary structure, monomer and dimer. Interacts with CYBA, CYBA-CYBB complex and ATG4B. Interacts (via GB1/RHD3-type G domain) with NCF2 and NCF2-NCF4 complex.

It is found in the cytoplasmic vesicle membrane. The enzyme catalyses GTP + H2O = GDP + phosphate + H(+). It carries out the reaction GDP + H2O = GMP + phosphate + H(+). Functionally, interferon (IFN)-inducible GTPase that plays important roles in innate immunity against a diverse range of bacterial, viral and protozoan pathogens. Hydrolyzes GTP to GMP in two consecutive cleavage reactions and predominantly uses GTP and not GDP or GMP as the substrate. Following infection, recruited to the pathogen-containing vacuoles or vacuole-escaped bacteria and acts as a positive regulator of inflammasome assembly by promoting the release of inflammasome ligands from bacteria. Acts by promoting lysis of pathogen-containing vacuoles, releasing pathogens into the cytosol. Following pathogen release in the cytosol, promotes recruitment of proteins that mediate bacterial cytolysis: this liberates ligands that are detected by inflammasomes, such as lipopolysaccharide (LPS) that activates the non-canonical CASP4/CASP11 inflammasome or double-stranded DNA (dsDNA) that activates the AIM2 inflammasome. Also promotes IFN-gamma-mediated host defense against bacterial infections by regulating oxidative responses and bacteriolytic peptide generation. May help to assemble NADPH oxidase on phagosomal membranes by acting as a bridging protein between NADPH oxidase cytosolic subunits NCF2-NCF4 and the membrane subunits CYBA-CYBB. Participates along with GBP1 in trafficking monoubiquinated protein cargo to autolysosomes for generating ubiquitin-derived antimicrobial peptides. Facilitates influenza A virus replication by inhibiting the activation of NF-kappaB and JAK-STAT signaling pathways and the expression of type I, type III interferons and pro-inflammatory cytokines. Confers protection to several pathogens, including the bacterial pathogens Listeria monocytogenes and Mycobacterium bovis BCG as well as the protozoan pathogen Toxoplasma gondii. Required for disruption of the parasitophorous vacuole formed following T.gondii infection and subsequent killing of the parasite. The polypeptide is Guanylate-binding protein 7 (GBP7) (Homo sapiens (Human)).